A 461-amino-acid polypeptide reads, in one-letter code: Argininosuccinate lyase (461 aa).

It belongs to the lyase 1 family. Argininosuccinate lyase subfamily.

It localises to the cytoplasm. The enzyme catalyses 2-(N(omega)-L-arginino)succinate = fumarate + L-arginine. Its pathway is amino-acid biosynthesis; L-arginine biosynthesis; L-arginine from L-ornithine and carbamoyl phosphate: step 3/3. This Streptococcus thermophilus (strain CNRZ 1066) protein is Argininosuccinate lyase.